The sequence spans 468 residues: MSELVLARIQFASTTLFHFLFVPMSIGLVFMVALMETLYLVKKNELYLKMAKFWGHLFLINFAVGVVTGILQEFQFGLNWSDYSRFVGDVFGAPLAIEALLAFFMESIFIGLWIFGWDRLPKKIHALCIWLVSFGTIMSSFWILTANSFMQEPVGFTIKNGRAEMNDFGALITNPQLWVEFPHVIFGALATGAFFIAGVSAFKLLKKKEVPFFKQSFKLAMIVGLCAGLGVGLSGHMQAEHLMESQPMKMAASEGLWEDSGDPAAWTAFATIDTKNEKSSNEIKVPYALSYLAYQKFSGSVKGMKTLQAEYEKIYGKGDYIPPVKTTFWSFRIMVGAGVVMILAALGGLWLNRRKKLENSKWYLRIMIALISFPFLANSAGWIMTEIGRQPWTVMGLMTTAQSVSPNVTAGSLLFSIIAFGVMYMILGALLVFLFIREIKKGAEHDNHHDVPVSTDPFSQEVYHGISS.

A run of 9 helical transmembrane segments spans residues 15 to 35 (TLFHFLFVPMSIGLVFMVALM), 51 to 71 (AKFWGHLFLINFAVGVVTGIL), 95 to 115 (LAIEALLAFFMESIFIGLWIF), 124 to 144 (IHALCIWLVSFGTIMSSFWIL), 177 to 197 (LWVEFPHVIFGALATGAFFIA), 219 to 239 (LAMIVGLCAGLGVGLSGHMQA), 331 to 351 (FRIMVGAGVVMILAALGGLWL), 366 to 386 (IMIALISFPFLANSAGWIMTE), and 416 to 436 (SIIAFGVMYMILGALLVFLFI). His18 provides a ligand contact to heme b. His183 contributes to the heme b binding site. Residue Met334 coordinates heme b. Residues 448–468 (HHDVPVSTDPFSQEVYHGISS) are disordered.

The protein belongs to the cytochrome ubiquinol oxidase subunit 1 family. As to quaternary structure, heterodimer of subunits I and II. Heme b is required as a cofactor. It depends on heme d cis-diol as a cofactor.

The protein resides in the cell membrane. The catalysed reaction is 2 a ubiquinol + O2(in) + 4 H(+)(in) = 2 a ubiquinone + 2 H2O(in) + 4 H(+)(out). The sequence is that of Cytochrome bd ubiquinol oxidase subunit 1 (cydA) from Bacillus subtilis (strain 168).